Reading from the N-terminus, the 327-residue chain is Small ribosomal subunit protein RACK1z (327 aa).

WD repeat units lie at residues 13-44, 61-91, 103-133, 148-180, 192-222, 233-262, and 293-323; these read AHTD…ILWK, GHSH…RLWD, GHTK…KLWN, GHRD…KVWN, GHTG…LLWD, EANS…KIWD, and RKVI…RVWG.

The protein belongs to the WD repeat G protein beta family. Ribosomal protein RACK1 subfamily. As to quaternary structure, homodimer and heterodimer with RACK1B or RACK1C. Interacts with NUDT7. Interacts with GB1, MEKK1, MKK4, MKK5, MPK3 and MPK6, but not with GPA1 or MPK4. Interacts with OFUT20. In terms of tissue distribution, widely expressed.

Its subcellular location is the cytoplasm. It is found in the nucleus. Major component of the RACK1 regulatory proteins that play a role in multiple signal transduction pathways. Involved in multiple hormone responses and developmental processes. MAPK cascade scaffolding protein involved in the protease IV and ArgC signaling pathway but not the flg22 pathway. The protein is Small ribosomal subunit protein RACK1z of Arabidopsis thaliana (Mouse-ear cress).